The following is a 431-amino-acid chain: Histidinol dehydrogenase (431 aa).

Residues tyrosine 130, glutamine 191, and asparagine 214 each contribute to the NAD(+) site. Positions 237, 261, and 264 each coordinate substrate. 2 residues coordinate Zn(2+): glutamine 261 and histidine 264. Catalysis depends on proton acceptor residues glutamate 329 and histidine 330. Residues histidine 330, aspartate 363, glutamate 417, and histidine 422 each contribute to the substrate site. Zn(2+) is bound at residue aspartate 363. Zn(2+) is bound at residue histidine 422.

Belongs to the histidinol dehydrogenase family. The cofactor is Zn(2+).

The enzyme catalyses L-histidinol + 2 NAD(+) + H2O = L-histidine + 2 NADH + 3 H(+). It functions in the pathway amino-acid biosynthesis; L-histidine biosynthesis; L-histidine from 5-phospho-alpha-D-ribose 1-diphosphate: step 9/9. Functionally, catalyzes the sequential NAD-dependent oxidations of L-histidinol to L-histidinaldehyde and then to L-histidine. This is Histidinol dehydrogenase from Psychrobacter arcticus (strain DSM 17307 / VKM B-2377 / 273-4).